Here is a 468-residue protein sequence, read N- to C-terminus: Probable acid phosphatase DIA3 (468 aa).

Residues 1 to 20 (MVKPVIFAICLGVLLSKALS) form the signal peptide. His76 serves as the catalytic Nucleophile. Residues Asn98, Asn163, Asn193, Asn202, Asn238, Asn251, and Asn316 are each glycosylated (N-linked (GlcNAc...) asparagine). The active-site Proton donor is Asp339. N-linked (GlcNAc...) asparagine glycosylation is found at Asn357, Asn391, Asn457, and Asn462.

The protein belongs to the histidine acid phosphatase family.

The enzyme catalyses a phosphate monoester + H2O = an alcohol + phosphate. In Saccharomyces cerevisiae (strain ATCC 204508 / S288c) (Baker's yeast), this protein is Probable acid phosphatase DIA3 (DIA3).